The sequence spans 295 residues: Myosin light chain kinase A (295 aa).

The Protein kinase domain occupies tyrosine 8–leucine 265. ATP contacts are provided by residues leucine 14–valine 22 and lysine 37. The Proton acceptor role is filled by aspartate 130. Phosphothreonine occurs at positions 166 and 289. The tract at residues tryptophan 264–asparagine 295 is autoinhibitory domain.

This sequence belongs to the protein kinase superfamily. CAMK Ser/Thr protein kinase family. CaMK subfamily. Autophosphorylated. Transiently phosphorylated on Thr-166 and Thr-289. This phosphorylation is gbpC-dependent.

It carries out the reaction L-seryl-[myosin light chain] + ATP = O-phospho-L-seryl-[myosin light chain] + ADP + H(+). The catalysed reaction is L-threonyl-[myosin light chain] + ATP = O-phospho-L-threonyl-[myosin light chain] + ADP + H(+). Possesses an autoinhibitory domain. Autophosphorylation appears to increase the enzymatic activity. Activation is gbdC-dependent. Does not have a calmodulin-binding domain. Functionally, phosphorylates a specific serine in the N-terminus of a myosin light chain. Phosphorylates regulatory myosin light chain (mlcR) during chemotaxis. mlcR phosphorylation increases the motility and actin-activated ATPase activity of myosin, contributing to chemotaxis. The sequence is that of Myosin light chain kinase A (mlkA) from Dictyostelium discoideum (Social amoeba).